Consider the following 126-residue polypeptide: Prefoldin subunit beta (126 aa).

Belongs to the prefoldin subunit beta family. As to quaternary structure, heterohexamer of two alpha and four beta subunits.

Its subcellular location is the cytoplasm. Molecular chaperone capable of stabilizing a range of proteins. Seems to fulfill an ATP-independent, HSP70-like function in archaeal de novo protein folding. The protein is Prefoldin subunit beta of Saccharolobus islandicus (strain Y.N.15.51 / Yellowstone #2) (Sulfolobus islandicus).